Reading from the N-terminus, the 32-residue chain is NSWENNKNIIFSGSLIWVFLLIIVGFLNYLVV.

Residues 9 to 29 (IIFSGSLIWVFLLIIVGFLNY) form a helical membrane-spanning segment.

It belongs to the PsbZ family. PSII is composed of 1 copy each of membrane proteins PsbA, PsbB, PsbC, PsbD, PsbE, PsbF, PsbH, PsbI, PsbJ, PsbK, PsbL, PsbM, PsbT, PsbY, PsbZ, Psb30/Ycf12, at least 3 peripheral proteins of the oxygen-evolving complex and a large number of cofactors. It forms dimeric complexes.

Its subcellular location is the plastid. It is found in the chloroplast thylakoid membrane. May control the interaction of photosystem II (PSII) cores with the light-harvesting antenna, regulates electron flow through the 2 photosystem reaction centers. PSII is a light-driven water plastoquinone oxidoreductase, using light energy to abstract electrons from H(2)O, generating a proton gradient subsequently used for ATP formation. In Euglena myxocylindracea, this protein is Photosystem II reaction center protein Z.